Here is a 115-residue protein sequence, read N- to C-terminus: MSNIIKQIEQEQLKQDVPSFRPGDSVEVKVWVVEGAKKRLQAFEGVVIAIRNRGLHSAFTVRKISNGEGVERVFQTHSPVIDSITVKRRGAVRQAKLYYLRERTGKSARIKERLG.

Belongs to the bacterial ribosomal protein bL19 family.

In terms of biological role, this protein is located at the 30S-50S ribosomal subunit interface and may play a role in the structure and function of the aminoacyl-tRNA binding site. This is Large ribosomal subunit protein bL19 from Erwinia tasmaniensis (strain DSM 17950 / CFBP 7177 / CIP 109463 / NCPPB 4357 / Et1/99).